The chain runs to 230 residues: Early E1A protein (230 aa).

The interval 40–48 (PSLHDLFDL) is interaction with RB1 in competition with E2F1. The short motif at 106–110 (LLCLE) is the LXCXE motif, interaction with host RB1 element. A zinc finger spans residues 145-163 (CLRCAYYQEQGENSICGLC). Positions 189–230 (KPGSRKRSAVTSRGSVESSKRPCLPEPEQTEPLDLSLKPRPQ) are disordered. The PXDLS motif, CTBP-binding signature appears at 220–224 (PLDLS). A Nuclear localization signal motif is present at residues 226 to 230 (KPRPQ).

This sequence belongs to the adenoviridae E1A protein family. Interacts with host UBE2I; this interaction interferes with polySUMOylation. Interacts with host RB1; this interaction induces the aberrant dissociation of RB1-E2F1 complex thereby disrupting the activity of RB1 and activating E2F1-regulated genes. Interacts with host ATF7; the interaction enhances ATF7-mediated viral transactivation activity which requires the zinc binding domains of both proteins. Isoform early E1A 32 kDa protein and isoform early E1A 26 kDa protein interact (via N-terminus) with CUL1 and E3 ubiquitin ligase RBX1; these interactions inhibit RBX1-CUL1-dependent elongation reaction of ubiquitin chains and attenuate ubiquitination of SCF(FBXW7) target proteins. Interacts (via PXLXP motif) with host ZMYND11/BS69 (via MYND-type zinc finger); this interaction inhibits E1A mediated transactivation. Interacts with host EP300; this interaction stimulates the acetylation of RB1 by recruiting EP300 and RB1 into a multimeric-protein complex. Interacts with host CTBP1 and CTBP2; this interaction seems to potentiate viral replication. Interacts with host DCAF7. Interacts with host DYRK1A. Interacts with host KPNA4; this interaction allows E1A import into the host nucleus. Interacts with host EP400; this interaction stabilizes MYC. Interacts with host TBP protein; this interaction probably disrupts the TBP-TATA complex.

It localises to the host nucleus. Functionally, plays a role in viral genome replication by driving entry of quiescent cells into the cell cycle. Stimulation of progression from G1 to S phase allows the virus to efficiently use the cellular DNA replicating machinery to achieve viral genome replication. E1A protein has both transforming and trans-activating activities. Induces the disassembly of the E2F1 transcription factor from RB1 by direct competition for the same binding site on RB1, with subsequent transcriptional activation of E2F1-regulated S-phase genes and of the E2 region of the adenoviral genome. Release of E2F1 leads to the ARF-mediated inhibition of MDM2 and causes TP53/p53 to accumulate because it is not targeted for degradation by MDM2-mediated ubiquitination anymore. This increase in TP53, in turn, would arrest the cell proliferation and direct its death but this effect is counteracted by the viral protein E1B-55K. Inactivation of the ability of RB1 to arrest the cell cycle is critical for cellular transformation, uncontrolled cellular growth and proliferation induced by viral infection. Interaction with RBX1 and CUL1 inhibits ubiquitination of the proteins targeted by SCF(FBXW7) ubiquitin ligase complex, and may be linked to unregulated host cell proliferation. The tumorigenesis-restraining activity of E1A may be related to the disruption of the host CtBP-CtIP complex through the CtBP binding motif. The polypeptide is Early E1A protein (Canine adenovirus serotype 1 (strain CLL) (CAdV-1)).